The following is a 398-amino-acid chain: Secreted aspartic protease 2 (398 aa).

Residues 1-18 (MFLKNIFIALAIALLVDA) form the signal peptide. Positions 19-56 (TPTTTKRSAGFVALDFSVVKTPKAFPVTNGQEGKTSKR) are cleaved as a propeptide — activation peptide. Residues 70–384 (YAADITVGSN…DLDDNEISLA (315 aa)) form the Peptidase A1 domain. Aspartate 88 is an active-site residue. Position 88-90 (88-90 (DTG)) interacts with pepstatin A. A disulfide bridge connects residues cysteine 103 and cysteine 115. Residue 141-142 (GD) coordinates pepstatin A. The Zn(2+) site is built by aspartate 247 and aspartate 270. The active site involves aspartate 274. 274 to 278 (DSGTT) is a pepstatin A binding site. A disulfide bridge connects residues cysteine 312 and cysteine 350. Asparagine 313 and asparagine 321 each carry an N-linked (GlcNAc...) asparagine glycan.

It belongs to the peptidase A1 family. As to quaternary structure, monomer.

The protein localises to the secreted. It catalyses the reaction Preferential cleavage at the carboxyl of hydrophobic amino acids, but fails to cleave 15-Leu-|-Tyr-16, 16-Tyr-|-Leu-17 and 24-Phe-|-Phe-25 of insulin B chain. Activates trypsinogen, and degrades keratin.. Functionally, secreted aspartic peptidases (SAPs) are a group of ten acidic hydrolases considered as key virulence factors. These enzymes supply the fungus with nutrient amino acids as well as are able to degrade the selected host's proteins involved in the immune defense. Induces host inflammatory cytokine production in a proteolytic activity-independent way. Plays a role in tissue damage during superficial infection. Moreover, acts toward human hemoglobin though limited proteolysis to generate a variety of antimicrobial hemocidins, enabling to compete with the other microorganisms of the same physiological niche using the microbicidal peptides generated from the host protein. Its function is as follows. Plays a key role in defense against host by cleaving histatin-5 (Hst 5), a peptide from human saliva that carries out fungicidal activity. The cleavage rate decreases in an order of SAP2 &gt; SAP9 &gt; SAP3 &gt; SAP7 &gt; SAP4 &gt; SAP1 &gt; SAP8. The first cleavage occurs between residues 'Lys-17' and 'His-18' of Hst 5, giving DSHAKRHHGYKRKFHEK and HHSHRGY peptides. Simultaneously, the DSHAKRHHGYKRK peptide is also formed. Further fragmentation by SAP2 results in FHEK and DSHAKRHHGY products. The polypeptide is Secreted aspartic protease 2 (Candida albicans (strain SC5314 / ATCC MYA-2876) (Yeast)).